A 509-amino-acid polypeptide reads, in one-letter code: Maturase K (509 aa).

It belongs to the intron maturase 2 family. MatK subfamily.

Its subcellular location is the plastid. The protein resides in the chloroplast. Functionally, usually encoded in the trnK tRNA gene intron. Probably assists in splicing its own and other chloroplast group II introns. This chain is Maturase K, found in Austrocylindropuntia vestita (Cactus).